Reading from the N-terminus, the 141-residue chain is uncharacterized protein (141 aa).

The interval 1 to 61 is disordered; sequence IRLLHSLTPP…PPPPPPPRRA (61 aa). Residues 8–58 show a composition bias toward pro residues; it reads TPPPPPPPPPPPPPPPPPPPPPPPPPPPPPPPPPPPPPPPPPPPPPPPPPP. Positions 98–116 form a DNA-binding region, H-T-H motif; sequence KRLLVAYPVRHFLSAACQF.

This is an uncharacterized protein from Owenia fusiformis (Polychaete worm).